The following is a 335-amino-acid chain: Acetyl-coenzyme A carboxylase carboxyl transferase subunit alpha (335 aa).

The CoA carboxyltransferase C-terminal domain occupies 48 to 308; the sequence is TLEKKVDALR…KGMLIEELKA (261 aa).

It belongs to the AccA family. In terms of assembly, acetyl-CoA carboxylase is a heterohexamer composed of biotin carboxyl carrier protein (AccB), biotin carboxylase (AccC) and two subunits each of ACCase subunit alpha (AccA) and ACCase subunit beta (AccD).

It localises to the cytoplasm. The catalysed reaction is N(6)-carboxybiotinyl-L-lysyl-[protein] + acetyl-CoA = N(6)-biotinyl-L-lysyl-[protein] + malonyl-CoA. It functions in the pathway lipid metabolism; malonyl-CoA biosynthesis; malonyl-CoA from acetyl-CoA: step 1/1. In terms of biological role, component of the acetyl coenzyme A carboxylase (ACC) complex. First, biotin carboxylase catalyzes the carboxylation of biotin on its carrier protein (BCCP) and then the CO(2) group is transferred by the carboxyltransferase to acetyl-CoA to form malonyl-CoA. The polypeptide is Acetyl-coenzyme A carboxylase carboxyl transferase subunit alpha (Chlorobium luteolum (strain DSM 273 / BCRC 81028 / 2530) (Pelodictyon luteolum)).